Here is a 274-residue protein sequence, read N- to C-terminus: Malonyl-[acyl-carrier protein] O-methyltransferase (274 aa).

The protein belongs to the methyltransferase superfamily.

The catalysed reaction is malonyl-[ACP] + S-adenosyl-L-methionine = malonyl-[ACP] methyl ester + S-adenosyl-L-homocysteine. It functions in the pathway cofactor biosynthesis; biotin biosynthesis. In terms of biological role, converts the free carboxyl group of a malonyl-thioester to its methyl ester by transfer of a methyl group from S-adenosyl-L-methionine (SAM). It allows to synthesize pimeloyl-ACP via the fatty acid synthetic pathway. The chain is Malonyl-[acyl-carrier protein] O-methyltransferase from Bacteroides helcogenes (strain ATCC 35417 / DSM 20613 / JCM 6297 / CCUG 15421 / P 36-108).